Reading from the N-terminus, the 427-residue chain is Terminal nucleotidyltransferase 5B (427 aa).

Residues 1–49 (MMPSESGAESLEQPAAQVGTGAASAVATAGAAGGGPDPEASSASLGRHQ) are disordered. Low complexity predominate over residues 15 to 30 (AAQVGTGAASAVATAG).

It belongs to the TENT family.

The protein resides in the cytoplasm. It localises to the nucleus. It carries out the reaction RNA(n) + ATP = RNA(n)-3'-adenine ribonucleotide + diphosphate. In terms of biological role, catalyzes the transfer of one adenosine molecule from an ATP to an mRNA poly(A) tail bearing a 3'-OH terminal group in an ATP hydrolysis-dependent manner. May be involved in maintaining the translation efficiency of at least some genes through preventing degradation of their mRNAs. Prefers RNA molecules that are adenosine-rich close to 3'-end. In addition, may inhibit cell proliferation and cell cycle progression through ubiquitination of beta-catenin/CTNNB1. This is Terminal nucleotidyltransferase 5B from Mus musculus (Mouse).